A 274-amino-acid chain; its full sequence is Diaminopimelate epimerase (274 aa).

Residues Asn-11, Gln-44, and Asn-64 each coordinate substrate. Catalysis depends on Cys-73, which acts as the Proton donor. Substrate-binding positions include 74–75 (GN), Asn-157, Asn-190, and 208–209 (ER). Residue Cys-217 is the Proton acceptor of the active site. Position 218-219 (218-219 (GS)) interacts with substrate.

Belongs to the diaminopimelate epimerase family. As to quaternary structure, homodimer.

It is found in the cytoplasm. The catalysed reaction is (2S,6S)-2,6-diaminopimelate = meso-2,6-diaminopimelate. The protein operates within amino-acid biosynthesis; L-lysine biosynthesis via DAP pathway; DL-2,6-diaminopimelate from LL-2,6-diaminopimelate: step 1/1. In terms of biological role, catalyzes the stereoinversion of LL-2,6-diaminopimelate (L,L-DAP) to meso-diaminopimelate (meso-DAP), a precursor of L-lysine and an essential component of the bacterial peptidoglycan. This is Diaminopimelate epimerase from Proteus mirabilis (strain HI4320).